Consider the following 116-residue polypeptide: Protein TCL1B1 (116 aa).

It belongs to the TCL1 family.

This Mus musculus (Mouse) protein is Protein TCL1B1 (Tcl1b1).